Here is a 474-residue protein sequence, read N- to C-terminus: Protein nucleotidyltransferase YdiU (474 aa).

The ATP site is built by glycine 89, glycine 91, arginine 92, lysine 112, aspartate 124, glycine 125, arginine 175, and arginine 182. The active-site Proton acceptor is aspartate 256. The Mg(2+) site is built by asparagine 257 and aspartate 266. Residue aspartate 266 participates in ATP binding.

This sequence belongs to the SELO family. It depends on Mg(2+) as a cofactor. Requires Mn(2+) as cofactor.

It catalyses the reaction L-seryl-[protein] + ATP = 3-O-(5'-adenylyl)-L-seryl-[protein] + diphosphate. It carries out the reaction L-threonyl-[protein] + ATP = 3-O-(5'-adenylyl)-L-threonyl-[protein] + diphosphate. The enzyme catalyses L-tyrosyl-[protein] + ATP = O-(5'-adenylyl)-L-tyrosyl-[protein] + diphosphate. The catalysed reaction is L-histidyl-[protein] + UTP = N(tele)-(5'-uridylyl)-L-histidyl-[protein] + diphosphate. It catalyses the reaction L-seryl-[protein] + UTP = O-(5'-uridylyl)-L-seryl-[protein] + diphosphate. It carries out the reaction L-tyrosyl-[protein] + UTP = O-(5'-uridylyl)-L-tyrosyl-[protein] + diphosphate. In terms of biological role, nucleotidyltransferase involved in the post-translational modification of proteins. It can catalyze the addition of adenosine monophosphate (AMP) or uridine monophosphate (UMP) to a protein, resulting in modifications known as AMPylation and UMPylation. This Corynebacterium glutamicum (strain ATCC 13032 / DSM 20300 / JCM 1318 / BCRC 11384 / CCUG 27702 / LMG 3730 / NBRC 12168 / NCIMB 10025 / NRRL B-2784 / 534) protein is Protein nucleotidyltransferase YdiU.